We begin with the raw amino-acid sequence, 576 residues long: Interleukin-1 receptor type 1 (576 aa).

The signal sequence occupies residues 1–19 (MENMKVLLGLICLMVPLLS). Over 20–338 (LEIDVCTEYP…QLIYPVPDFK (319 aa)) the chain is Extracellular. Intrachain disulfides connect cysteine 25–cysteine 107, cysteine 46–cysteine 99, and cysteine 145–cysteine 199. 3 consecutive Ig-like C2-type domains span residues 25 to 115 (CTEY…VTVT), 121 to 213 (PGLC…YPVT), and 229 to 329 (PVIL…AHVQ). Asparagine 63, asparagine 103, asparagine 174, asparagine 236, asparagine 252, asparagine 266, and asparagine 300 each carry an N-linked (GlcNAc...) asparagine glycan. Cysteine 251 and cysteine 315 are oxidised to a cystine. The helical transmembrane segment at 339–359 (NYLIGGFIILTATIVCCVCIY) threads the bilayer. Residues 360–576 (KVFKVDIVLW…LPAATHLPLG (217 aa)) lie on the Cytoplasmic side of the membrane. The TIR domain maps to 386 to 541 (KTYDAYILYP…RFWKNLRYQM (156 aa)). Glutamate 473 is an active-site residue. The residue at position 499 (tyrosine 499) is a Phosphotyrosine. Threonine 556 carries the phosphothreonine; by PKC modification.

Belongs to the interleukin-1 receptor family. As to quaternary structure, the interleukin-1 receptor complex is a heterodimer of IL1R1 and IL1RAP. Interacts with PIK3R1. Interacts with IL1A. A soluble form (sIL1R1) is probably produced by proteolytic cleavage at the cell surface (shedding). In terms of processing, rapidly phosphorylated on Tyr-499 in response to IL-1, which creates a SH2 binding site for the PI 3-kinase regulatory subunit PIK3R1. As to expression, isoform 2 is expressed in various brain tissues.

It is found in the membrane. The protein resides in the cell membrane. It localises to the secreted. The enzyme catalyses NAD(+) + H2O = ADP-D-ribose + nicotinamide + H(+). Its function is as follows. Receptor for IL1A, IL1B and IL1RN. After binding to interleukin-1 associates with the coreceptor IL1RAP to form the high affinity interleukin-1 receptor complex which mediates interleukin-1-dependent activation of NF-kappa-B, MAPK and other pathways. Signaling involves the recruitment of adapter molecules such as TOLLIP, MYD88, and IRAK1 or IRAK2 via the respective TIR domains of the receptor/coreceptor subunits. Binds ligands with comparable affinity and binding of antagonist IL1RN prevents association with IL1RAP to form a signaling complex. Involved in IL1B-mediated costimulation of IFNG production from T-helper 1 (Th1) cells. Functionally, unable to mediate canonical IL-1 signaling. Cooperates with IL1RAP isoform 3 to mediate IL1B-induced neuronal activity including IL1B-potentiated NMDA-induced calcium influx mediated by Akt kinase activation. In Mus musculus (Mouse), this protein is Interleukin-1 receptor type 1 (Il1r1).